The following is a 286-amino-acid chain: Phosphatidylserine decarboxylase proenzyme (286 aa).

Catalysis depends on charge relay system; for autoendoproteolytic cleavage activity residues Asp-90, His-147, and Ser-250. The Schiff-base intermediate with substrate; via pyruvic acid; for decarboxylase activity role is filled by Ser-250. Ser-250 carries the pyruvic acid (Ser); by autocatalysis modification.

This sequence belongs to the phosphatidylserine decarboxylase family. PSD-B subfamily. Prokaryotic type I sub-subfamily. Heterodimer of a large membrane-associated beta subunit and a small pyruvoyl-containing alpha subunit. Pyruvate is required as a cofactor. In terms of processing, is synthesized initially as an inactive proenzyme. Formation of the active enzyme involves a self-maturation process in which the active site pyruvoyl group is generated from an internal serine residue via an autocatalytic post-translational modification. Two non-identical subunits are generated from the proenzyme in this reaction, and the pyruvate is formed at the N-terminus of the alpha chain, which is derived from the carboxyl end of the proenzyme. The autoendoproteolytic cleavage occurs by a canonical serine protease mechanism, in which the side chain hydroxyl group of the serine supplies its oxygen atom to form the C-terminus of the beta chain, while the remainder of the serine residue undergoes an oxidative deamination to produce ammonia and the pyruvoyl prosthetic group on the alpha chain. During this reaction, the Ser that is part of the protease active site of the proenzyme becomes the pyruvoyl prosthetic group, which constitutes an essential element of the active site of the mature decarboxylase.

The protein resides in the cell membrane. It carries out the reaction a 1,2-diacyl-sn-glycero-3-phospho-L-serine + H(+) = a 1,2-diacyl-sn-glycero-3-phosphoethanolamine + CO2. It participates in phospholipid metabolism; phosphatidylethanolamine biosynthesis; phosphatidylethanolamine from CDP-diacylglycerol: step 2/2. Catalyzes the formation of phosphatidylethanolamine (PtdEtn) from phosphatidylserine (PtdSer). This is Phosphatidylserine decarboxylase proenzyme from Psychromonas ingrahamii (strain DSM 17664 / CCUG 51855 / 37).